A 4065-amino-acid polypeptide reads, in one-letter code: Polyketide synthase-nonribosomal peptide synthetase pyiS (4065 aa).

Residues 6 to 440 (SEPVAIIGTG…GANCHAILEA (435 aa)) enclose the Ketosynthase family 3 (KS3) domain. Residues Cys-179, His-314, and His-360 each act as for beta-ketoacyl synthase activity in the active site. Residues 552–875 (IFTGQGAQWP…PYTGVLSRGK (324 aa)) are acyl transferase. The N-terminal hotdog fold stretch occupies residues 950–1087 (NELLGRQILD…CDVLVTYGDS (138 aa)). The 311-residue stretch at 950–1260 (NELLGRQILD…TQPLFNPTEA (311 aa)) folds into the PKS/mFAS DH domain. Positions 951 to 1254 (ELLGRQILDG…QVEGLQTQPL (304 aa)) are dehydratase (DH) domain. Catalysis depends on His-982, which acts as the Proton acceptor; for dehydratase activity. A C-terminal hotdog fold region spans residues 1102-1260 (EYFMLGVESD…TQPLFNPTEA (159 aa)). The active-site Proton donor; for dehydratase activity is the Asp-1166. The methyltransferase (MT) domain stretch occupies residues 1409 to 1593 (AHGMPRYTKY…KQTGFSGIDT (185 aa)). The ketoreductase (KR)domain stretch occupies residues 2129 to 2302 (TYWLVGLSGT…NASVVHIGAI (174 aa)). In terms of domain architecture, Carrier 1 spans 2411 to 2492 (INSAEVYEII…EILETAQQLL (82 aa)). O-(pantetheine 4'-phosphoryl)serine is present on Ser-2452. The tract at residues 2497–2561 (LPKMDPNDKS…GAKKGETVSK (65 aa)) is disordered. Over residues 2551–2561 (SGAKKGETVSK) the composition is skewed to basic and acidic residues. The interval 2645 to 3076 (SKKTPISFAQ…FSRNQALRLA (432 aa)) is condensation. An adenylation region spans residues 3112–3516 (DIAKQKSHSL…RLLLEGRIAD (405 aa)). The region spanning 3634–3714 (QDLNDTESRL…DMAALVDELS (81 aa)) is the Carrier 2 domain. O-(pantetheine 4'-phosphoryl)serine is present on Ser-3674. Positions 3760 to 3975 (LTGSTGFLGR…LDFISVDEAA (216 aa)) are reductase-like.

This sequence belongs to the NRP synthetase family.

The protein operates within mycotoxin biosynthesis. In terms of biological role, hybrid PKS-NRPS synthetase; part of the gene cluster that mediates the biosynthesis of the mycotoxin pyrichalasin H, a tyrosine-derived cytochalasan that inhibits the growth of rice seedlings, but also inhibits lymphocyte capping and actin polymerization and alters cell morphology. Pyrichalasin H is indicated as the responsible agent for the genus-specific pathogenicity of M.grisea toward crabgrass. The first step in the pathway is catalyzed by the O-methyltransferase pyiA which methylates free tyrosine to generate the precursor O-methyltyrosine. The hybrid PKS-NRPS pyiS, assisted by the enoyl reductase pyiC, are responsible for fusion of the O-methyltyrosine precursor and the polyketide backbone. The polyketide synthase module (PKS) of pyiS is responsible for the synthesis of the polyketide backbone and the downstream nonribosomal peptide synthetase (NRPS) amidates the carboxyl end of the polyketide with the O-methyltyrosine precursor. As the NRPS A-domain demonstrates substrate tolerance, pyiS can also use phenylalanine, tyrosine and even para-chlorophenylalanine as amino acid precursor, which leads to the production of novel cytochalasans, including halogenated cytochalasans. Because pyiS lacks a designated enoylreductase (ER) domain, the required activity is provided the enoyl reductase pyiC. Reduction by the hydrolyase pyiE leads to 1,5-dihydropyrrolone, which is substrate for dehydration and intra-molecular Diels-Alder cyclization by the Diels-Alderase pyiF to yield the required isoindolone-fused macrocycle. The tailoring cytochrome P450 monooxygenases piyD and piyG catalyze the hydroxylation at C-18 and C-7, respectivily, whereas the short-chain dehydrogenase/reductase pyiH reduces the carbonyl at C-21 in preparation for the transfer of an acetyl group by the acetyltransferase pyiB. These 3 reactions whose order is not clear yet, lead to the production of O-methylpyrichalasin J, a deacetylated pyrichalasin H. Finally, pyiB to converts O-methylpyrichalasin J into the final product pyrichalasin H via acetylation of C-21. The protein is Polyketide synthase-nonribosomal peptide synthetase pyiS of Pyricularia grisea (Crabgrass-specific blast fungus).